We begin with the raw amino-acid sequence, 91 residues long: Probable Fe(2+)-trafficking protein (91 aa).

This sequence belongs to the Fe(2+)-trafficking protein family.

Its function is as follows. Could be a mediator in iron transactions between iron acquisition and iron-requiring processes, such as synthesis and/or repair of Fe-S clusters in biosynthetic enzymes. The chain is Probable Fe(2+)-trafficking protein from Paraburkholderia phytofirmans (strain DSM 17436 / LMG 22146 / PsJN) (Burkholderia phytofirmans).